A 418-amino-acid chain; its full sequence is Putative ion-transport protein YfeO (418 aa).

The next 12 helical transmembrane spans lie at 10 to 30 (LLLS…LIMV), 54 to 74 (DSPL…GLVI), 99 to 119 (ALPG…SLGP), 120 to 140 (EHPI…RLLP), 149 to 169 (ILAS…AALI), 186 to 206 (LFAP…FFHP), 223 to 243 (ILSG…AVWC), 258 to 278 (VFVL…GGPV), 300 to 320 (DYFL…ASGF), 322 to 342 (GGRI…LHEH), 343 to 363 (VPAV…VLVV), and 371 to 391 (LFMA…CIVM).

The protein belongs to the chloride channel (TC 2.A.49) family.

The protein localises to the cell membrane. This is Putative ion-transport protein YfeO from Escherichia coli O127:H6 (strain E2348/69 / EPEC).